Consider the following 277-residue polypeptide: Antigen 1 (277 aa).

Positions 1–16 (MQLLALTLALCASIAA) are cleaved as a signal peptide. Asparagine 41, asparagine 71, asparagine 127, and asparagine 200 each carry an N-linked (GlcNAc...) asparagine glycan. A disordered region spans residues 230–277 (CVGGEEENDGQGEEQTEEPAQDDQQDEAAEEEIPENCHTHEGGELHCT). The segment covering 233-263 (GEEENDGQGEEQTEEPAQDDQQDEAAEEEIP) has biased composition (acidic residues). Basic and acidic residues predominate over residues 264-277 (ENCHTHEGGELHCT).

The protein belongs to the ZPS1 family.

The chain is Antigen 1 (aspnd1) from Emericella nidulans (strain FGSC A4 / ATCC 38163 / CBS 112.46 / NRRL 194 / M139) (Aspergillus nidulans).